Reading from the N-terminus, the 662-residue chain is Tubulin--tyrosine ligase-like protein 12 (662 aa).

Residues 324–660 form the TTL domain; sequence LKKRKIKVYA…LDEIDPTKVT (337 aa). Residues 472–475, lysine 491, and aspartate 493 each bind ATP; that span reads CEYI.

Belongs to the tubulin--tyrosine ligase family.

Regulates microtubule dynamics in uterine muscle cells. This is Tubulin--tyrosine ligase-like protein 12 from Caenorhabditis elegans.